Reading from the N-terminus, the 141-residue chain is Large ribosomal subunit protein uL11 (141 aa).

Belongs to the universal ribosomal protein uL11 family. In terms of assembly, part of the ribosomal stalk of the 50S ribosomal subunit. Interacts with L10 and the large rRNA to form the base of the stalk. L10 forms an elongated spine to which L12 dimers bind in a sequential fashion forming a multimeric L10(L12)X complex. Post-translationally, one or more lysine residues are methylated.

In terms of biological role, forms part of the ribosomal stalk which helps the ribosome interact with GTP-bound translation factors. The protein is Large ribosomal subunit protein uL11 of Chlamydia felis (strain Fe/C-56) (Chlamydophila felis).